The following is an 891-amino-acid chain: DNA mismatch repair protein MutS (891 aa).

634-641 is a binding site for ATP; that stretch reads GPNMGGKS.

It belongs to the DNA mismatch repair MutS family.

Its function is as follows. This protein is involved in the repair of mismatches in DNA. It is possible that it carries out the mismatch recognition step. This protein has a weak ATPase activity. This is DNA mismatch repair protein MutS from Burkholderia pseudomallei (strain 1106a).